The chain runs to 710 residues: U3 small nucleolar RNA-associated protein 4 (710 aa).

WD repeat units lie at residues 11-59 (YTPS…CLKT), 64-105 (GVDR…PLVN), 108-147 (SNAGAIWSIAICDETKTLAVGCDDGSCVLFDISGGPGVIE), 154-192 (RQTSRILSLDFQTKDHLVGGCADGVIKVWDLSTPNSAII), 199-241 (RARK…LSQS), 290-327 (FHSHDVRCMAVFECKSLDVLISGGMDMMLAVIPVRQFN), 328-365 (RKNHRMISAVPQRPRMAVAPKARLFMLWNDHEVLLWRI), 488-527 (SMCDGICSIAVSSDGDYFAVADTVGNIFCYSLSNLTYSEL), and 529-569 (RVNT…LSEW).

As to quaternary structure, component of the ribosomal small subunit (SSU) processome.

The protein localises to the nucleus. The protein resides in the nucleolus. In terms of biological role, involved in nucleolar processing of pre-18S ribosomal RNA. Required for optimal pre-ribosomal RNA transcription by RNA polymerase I together with a subset of U3 proteins required for transcription (t-UTPs). This is U3 small nucleolar RNA-associated protein 4 (utp4) from Schizosaccharomyces pombe (strain 972 / ATCC 24843) (Fission yeast).